We begin with the raw amino-acid sequence, 488 residues long: L-arabinose isomerase 2 (488 aa).

Glu306, Glu331, His348, and His447 together coordinate Mn(2+).

Belongs to the arabinose isomerase family. Mn(2+) is required as a cofactor.

It catalyses the reaction beta-L-arabinopyranose = L-ribulose. It participates in carbohydrate degradation; L-arabinose degradation via L-ribulose; D-xylulose 5-phosphate from L-arabinose (bacterial route): step 1/3. Its function is as follows. Catalyzes the conversion of L-arabinose to L-ribulose. This chain is L-arabinose isomerase 2, found in Clostridium acetobutylicum (strain ATCC 824 / DSM 792 / JCM 1419 / IAM 19013 / LMG 5710 / NBRC 13948 / NRRL B-527 / VKM B-1787 / 2291 / W).